We begin with the raw amino-acid sequence, 297 residues long: Ketohexokinase (297 aa).

Positions 15, 41, 42, and 45 each coordinate beta-D-fructose. ATP-binding positions include Arg-107, 225-228, and 254-257; these read AEEG and GAGD. Asp-257 lines the beta-D-fructose pocket.

This sequence belongs to the carbohydrate kinase PfkB family. As to quaternary structure, homodimer.

It carries out the reaction beta-D-fructose + ATP = beta-D-fructose 1-phosphate + ADP + H(+). It participates in carbohydrate metabolism; fructose metabolism. Requires potassium. Inhibition by ADP. Functionally, catalyzes the phosphorylation of the ketose sugar fructose to fructose-1-phosphate. The chain is Ketohexokinase (KHK) from Pongo abelii (Sumatran orangutan).